Here is a 157-residue protein sequence, read N- to C-terminus: 6,7-dimethyl-8-ribityllumazine synthase (157 aa).

5-amino-6-(D-ribitylamino)uracil-binding positions include Phe22, Ala57–Glu59, and Thr81–Ile83. Gly86–Thr87 is a binding site for (2S)-2-hydroxy-3-oxobutyl phosphate. The Proton donor role is filled by His89. Position 114 (Phe114) interacts with 5-amino-6-(D-ribitylamino)uracil. Arg128 contributes to the (2S)-2-hydroxy-3-oxobutyl phosphate binding site.

The protein belongs to the DMRL synthase family. Forms an icosahedral capsid composed of 60 subunits, arranged as a dodecamer of pentamers.

It carries out the reaction (2S)-2-hydroxy-3-oxobutyl phosphate + 5-amino-6-(D-ribitylamino)uracil = 6,7-dimethyl-8-(1-D-ribityl)lumazine + phosphate + 2 H2O + H(+). It functions in the pathway cofactor biosynthesis; riboflavin biosynthesis; riboflavin from 2-hydroxy-3-oxobutyl phosphate and 5-amino-6-(D-ribitylamino)uracil: step 1/2. In terms of biological role, catalyzes the formation of 6,7-dimethyl-8-ribityllumazine by condensation of 5-amino-6-(D-ribitylamino)uracil with 3,4-dihydroxy-2-butanone 4-phosphate. This is the penultimate step in the biosynthesis of riboflavin. This chain is 6,7-dimethyl-8-ribityllumazine synthase, found in Haemophilus influenzae (strain 86-028NP).